The following is a 1368-amino-acid chain: Indole-3-acetaldehyde oxidase (1368 aa).

One can recognise a 2Fe-2S ferredoxin-type domain in the interval 19 to 108 (TSLVFAINGQ…GCSITTSDGL (90 aa)). Positions 60, 65, and 68 each coordinate [2Fe-2S] cluster. Residues 246 to 427 (LHSRKYRWSS…LSLEIPSWHS (182 aa)) enclose the FAD-binding PCMH-type domain.

This sequence belongs to the xanthine dehydrogenase family. In terms of assembly, aldehyde oxidases (AO) are homodimers and heterodimers of AO subunits. AO-alpha is an AAO1 homodimer; AO-beta is an AAO1-AAO2 heterodimer. [2Fe-2S] cluster serves as cofactor. It depends on FAD as a cofactor. Mo-molybdopterin is required as a cofactor. In terms of tissue distribution, predominantly expressed in roots, seedlings, mature siliques and seeds, and to lower extent in stems and rosettes. In seedlings, mostly expressed in lower part of hypocotyls and roots.

The protein resides in the cytoplasm. The catalysed reaction is indole-3-acetaldehyde + O2 + H2O = (indol-3-yl)acetate + H2O2 + H(+). Strongly inhibited by iodoacetate and potassium cyanide (KCN). Weakly inhibited by 2-mercaptoethanol, dithiothreitol (DTT), menadione, estradiol, 4'-(9-acridinylamino)methanesulfon-m-anisidine (mAMSA), allopurinol and tritonX-100. Not affected by p-chloromercuribenzoate. In higher plants aldehyde oxidases (AO) appear to be homo- and heterodimeric assemblies of AO subunits with probably different physiological functions. AO-alpha may be involved in the biosynthesis of auxin, and in biosynthesis of abscisic acid (ABA) in seeds. In vitro, AO-alpha uses heptaldehyde, protocatechualdehyde, benzaldehyde, indole-3-aldehyde (IAld), indole-3-acetaldehyde (IAAld), cinnamaldehyde and citral as substrates; AO-beta uses IAAld, IAld and naphtaldehyde as substrates. The polypeptide is Indole-3-acetaldehyde oxidase (AAO1) (Arabidopsis thaliana (Mouse-ear cress)).